Here is a 41-residue protein sequence, read N- to C-terminus: Large ribosomal subunit protein bL36 (41 aa).

The protein belongs to the bacterial ribosomal protein bL36 family.

The sequence is that of Large ribosomal subunit protein bL36 from Zymomonas mobilis subsp. mobilis (strain ATCC 31821 / ZM4 / CP4).